A 263-amino-acid polypeptide reads, in one-letter code: Shikimate dehydrogenase (NADP(+)) (263 aa).

Shikimate-binding positions include 16–18 (SKS) and threonine 65. Lysine 69 (proton acceptor) is an active-site residue. Positions 90 and 105 each coordinate shikimate. NADP(+) is bound by residues 125 to 129 (GSGGS) and leucine 208. Tyrosine 210 contributes to the shikimate binding site. Glycine 230 lines the NADP(+) pocket.

Belongs to the shikimate dehydrogenase family. As to quaternary structure, homodimer.

The catalysed reaction is shikimate + NADP(+) = 3-dehydroshikimate + NADPH + H(+). It functions in the pathway metabolic intermediate biosynthesis; chorismate biosynthesis; chorismate from D-erythrose 4-phosphate and phosphoenolpyruvate: step 4/7. Its function is as follows. Involved in the biosynthesis of the chorismate, which leads to the biosynthesis of aromatic amino acids. Catalyzes the reversible NADPH linked reduction of 3-dehydroshikimate (DHSA) to yield shikimate (SA). The protein is Shikimate dehydrogenase (NADP(+)) of Helicobacter pylori (strain G27).